The following is a 36-amino-acid chain: Photosystem I reaction center subunit VIII (36 aa).

A helical membrane pass occupies residues 9–29 (ILVPLVGLVFPAIAMASLFLY).

The protein belongs to the PsaI family.

It is found in the plastid. It localises to the chloroplast thylakoid membrane. Its function is as follows. May help in the organization of the PsaL subunit. This is Photosystem I reaction center subunit VIII from Oltmannsiellopsis viridis (Marine flagellate).